Reading from the N-terminus, the 384-residue chain is Lipid-A-disaccharide synthase (384 aa).

The protein belongs to the LpxB family.

It catalyses the reaction a lipid X + a UDP-2-N,3-O-bis[(3R)-3-hydroxyacyl]-alpha-D-glucosamine = a lipid A disaccharide + UDP + H(+). It functions in the pathway bacterial outer membrane biogenesis; LPS lipid A biosynthesis. Its function is as follows. Condensation of UDP-2,3-diacylglucosamine and 2,3-diacylglucosamine-1-phosphate to form lipid A disaccharide, a precursor of lipid A, a phosphorylated glycolipid that anchors the lipopolysaccharide to the outer membrane of the cell. The protein is Lipid-A-disaccharide synthase of Cellvibrio japonicus (strain Ueda107) (Pseudomonas fluorescens subsp. cellulosa).